The following is a 66-amino-acid chain: Neurotoxin-like protein STR1 (66 aa).

The LCN-type CS-alpha/beta domain maps to 2–65 (RDGYIVHDGT…VWGEDGFMCW (64 aa)). Disulfide bonds link Cys-13–Cys-64, Cys-17–Cys-40, Cys-26–Cys-45, and Cys-30–Cys-47.

The protein belongs to the long (4 C-C) scorpion toxin superfamily. Sodium channel inhibitor family. Beta subfamily. As to expression, expressed by the venom gland.

The protein localises to the secreted. This protein is not toxic. This Androctonus australis (Sahara scorpion) protein is Neurotoxin-like protein STR1.